The primary structure comprises 546 residues: Chaperonin GroEL 2 (546 aa).

ATP contacts are provided by residues 30-33, Lys51, 87-91, Gly415, and Asp495; these read TLGP and DGTTT.

It belongs to the chaperonin (HSP60) family. Forms a cylinder of 14 subunits composed of two heptameric rings stacked back-to-back. Interacts with the co-chaperonin GroES.

It localises to the cytoplasm. It catalyses the reaction ATP + H2O + a folded polypeptide = ADP + phosphate + an unfolded polypeptide.. Its function is as follows. Together with its co-chaperonin GroES, plays an essential role in assisting protein folding. The GroEL-GroES system forms a nano-cage that allows encapsulation of the non-native substrate proteins and provides a physical environment optimized to promote and accelerate protein folding. This is Chaperonin GroEL 2 from Burkholderia cenocepacia (strain HI2424).